A 661-amino-acid polypeptide reads, in one-letter code: tRNA uridine 5-carboxymethylaminomethyl modification enzyme MnmG (661 aa).

Residue 13-18 coordinates FAD; the sequence is GGGHAG. Position 285–299 (285–299) interacts with NAD(+); it reads GPRYCPSVEDKINRF.

It belongs to the MnmG family. As to quaternary structure, homodimer. Heterotetramer of two MnmE and two MnmG subunits. Requires FAD as cofactor.

Its subcellular location is the cytoplasm. In terms of biological role, NAD-binding protein involved in the addition of a carboxymethylaminomethyl (cmnm) group at the wobble position (U34) of certain tRNAs, forming tRNA-cmnm(5)s(2)U34. The sequence is that of tRNA uridine 5-carboxymethylaminomethyl modification enzyme MnmG from Acidovorax sp. (strain JS42).